The sequence spans 229 residues: Peptidase E (229 aa).

Active-site charge relay system residues include Ser120, Asp135, and His157.

Belongs to the peptidase S51 family.

The protein resides in the cytoplasm. It catalyses the reaction Dipeptidase E catalyzes the hydrolysis of dipeptides Asp-|-Xaa. It does not act on peptides with N-terminal Glu, Asn or Gln, nor does it cleave isoaspartyl peptides.. Its function is as follows. Hydrolyzes dipeptides containing N-terminal aspartate residues. May play a role in allowing the cell to use peptide aspartate to spare carbon otherwise required for the synthesis of the aspartate family of amino acids. The protein is Peptidase E of Citrobacter koseri (strain ATCC BAA-895 / CDC 4225-83 / SGSC4696).